The primary structure comprises 298 residues: Troponin T, cardiac muscle (298 aa).

Residues 1-70 (MSDIEEVVEE…EAKEAEDGPM (70 aa)) show a composition bias toward acidic residues. Disordered stretches follow at residues 1 to 95 (MSDI…GERV) and 120 to 219 (FENR…EKKK). Ser2 is subject to N-acetylserine. Ser2 bears the Phosphoserine; by CK2 mark. Basic and acidic residues-rich tracts occupy residues 120 to 183 (FENR…DEAR) and 203 to 219 (QTER…EKKK). Thr204 is subject to Phosphothreonine; by PKC/PRKCA. Position 208 is a phosphoserine; by PKC/PRKCA (Ser208). Thr213 is modified (phosphothreonine; by PKC/PRKCA and RAF1). The residue at position 294 (Thr294) is a Phosphothreonine; by PKC/PRKCA.

Belongs to the troponin T family. Post-translationally, phosphorylation at Thr-213 by PRKCA induces significant reduction in myofilament calcium sensitivity and actomyosin ATPase activity. In terms of tissue distribution, heart. The fetal heart shows a greater expression in the atrium than in the ventricle, while the adult heart shows a greater expression in the ventricle than in the atrium. Isoform 6 predominates in normal adult heart. Isoforms 1, 7 and 8 are expressed in fetal heart. Isoform 7 is also expressed in failing adult heart.

In terms of biological role, troponin T is the tropomyosin-binding subunit of troponin, the thin filament regulatory complex which confers calcium-sensitivity to striated muscle actomyosin ATPase activity. This is Troponin T, cardiac muscle (TNNT2) from Homo sapiens (Human).